Reading from the N-terminus, the 369-residue chain is DNA replication and repair protein RecF (369 aa).

30–37 (GINAQGKT) provides a ligand contact to ATP.

This sequence belongs to the RecF family.

It is found in the cytoplasm. Its function is as follows. The RecF protein is involved in DNA metabolism; it is required for DNA replication and normal SOS inducibility. RecF binds preferentially to single-stranded, linear DNA. It also seems to bind ATP. This is DNA replication and repair protein RecF from Macrococcus caseolyticus (strain JCSC5402) (Macrococcoides caseolyticum).